Here is a 376-residue protein sequence, read N- to C-terminus: Carbohydrate sulfotransferase 14 (376 aa).

The Cytoplasmic segment spans residues 1-39 (MFPRPLTPLAAPNGAEPLGRALRRAPLGRARAGLGGPPL). Residues 40-60 (LLPSMLMFAVIVASSGLLLMI) form a helical; Signal-anchor for type II membrane protein membrane-spanning segment. At 61–376 (ERGILAEMKP…PNVTKEACQQ (316 aa)) the chain is on the lumenal side. The N-linked (GlcNAc...) asparagine glycan is linked to Asn-110. 3'-phosphoadenylyl sulfate contacts are provided by residues 155-161 (PKVACSN) and 213-221 (REPLERLLS). A glycan (N-linked (GlcNAc...) asparagine) is linked at Asn-368.

Belongs to the sulfotransferase 2 family. As to expression, widely expressed. Expressed at high level in pituitary gland, placenta, uterus and thyroid.

The protein localises to the golgi apparatus membrane. The catalysed reaction is dermatan + n 3'-phosphoadenylyl sulfate = dermatan 4'-sulfate + n adenosine 3',5'-bisphosphate + n H(+). Catalyzes the transfer of sulfate to position 4 of the N-acetylgalactosamine (GalNAc) residue of dermatan sulfate. Plays a pivotal role in the formation of 4-0-sulfated IdoA blocks in dermatan sulfate. Transfers sulfate to the C-4 hydroxyl of beta1,4-linked GalNAc that is substituted with an alpha-linked iduronic acid (IdoUA) at the C-3 hydroxyl. Transfers sulfate more efficiently to GalNAc residues in -IdoUA-GalNAc-IdoUA- than in -GlcUA-GalNAc-GlcUA-sequences. Has preference for partially desulfated dermatan sulfate. Addition of sulfate to GalNAc may occur immediately after epimerization of GlcUA to IdoUA. Appears to have an important role in the formation of the cerebellar neural network during postnatal brain development. The chain is Carbohydrate sulfotransferase 14 (CHST14) from Homo sapiens (Human).